The chain runs to 674 residues: CLK4-associating serine/arginine rich protein (674 aa).

S101 carries the post-translational modification Phosphoserine. Disordered stretches follow at residues 171–232 and 258–674; these read TVAE…GMAD and EKAM…HYRH. Acidic residues predominate over residues 182–214; the sequence is PEEEESAAEEESNSDEDEVIPDIDVEVDVDELN. The span at 265–283 shows a compositional bias: basic residues; the sequence is RRSRRQRREFREKRLRGRK. Residues S285 and S294 each carry the phosphoserine modification. The span at 290–313 shows a compositional bias: basic and acidic residues; sequence ARRDSPTYDPYKRSPSESSSESRS. T327 carries the phosphothreonine modification. Residues S331 and S335 each carry the phosphoserine modification. Over residues 356 to 365 the composition is skewed to pro residues; the sequence is PPAPPQPGGP. The segment covering 378-399 has biased composition (low complexity); it reads SSSSSSSSASRTSSSRSSSRSS. Basic residues-rich tracts occupy residues 411–443 and 481–492; these read SGRH…RRHS and RGGRGLRHHSSS. 2 stretches are compositionally biased toward low complexity: residues 493–506 and 514–532; these read RSRS…SRSR and HSPS…SQSP. S547 is modified (phosphoserine). T573 carries the post-translational modification Phosphothreonine. A coiled-coil region spans residues 585–647; the sequence is ALNRQFKADK…ERQYSRQSRS (63 aa). Composition is skewed to basic and acidic residues over residues 590 to 617 and 625 to 641; these read FKAD…ELRA and KERE…ERQY. The segment covering 642 to 651 has biased composition (low complexity); it reads SRQSRSPSPR. Positions 659–674 are enriched in basic residues; that stretch reads SRRRSRSRSRSPHYRH.

It belongs to the splicing factor SR family. Probably interacts with CLK4. In terms of processing, phosphorylated in vitro by CLK4.

It is found in the nucleus. In terms of biological role, probably functions as an alternative splicing regulator. May regulate the mRNA splicing of genes such as CLK1. May act by regulating members of the CLK kinase family. In Homo sapiens (Human), this protein is CLK4-associating serine/arginine rich protein (CLASRP).